A 203-amino-acid chain; its full sequence is Large ribosomal subunit protein bL25 (203 aa).

This sequence belongs to the bacterial ribosomal protein bL25 family. CTC subfamily. Part of the 50S ribosomal subunit; part of the 5S rRNA/L5/L18/L25 subcomplex. Contacts the 5S rRNA. Binds to the 5S rRNA independently of L5 and L18.

In terms of biological role, this is one of the proteins that binds to the 5S RNA in the ribosome where it forms part of the central protuberance. The protein is Large ribosomal subunit protein bL25 of Pseudomonas syringae pv. tomato (strain ATCC BAA-871 / DC3000).